Here is a 125-residue protein sequence, read N- to C-terminus: Large ribosomal subunit protein bL21 (125 aa).

This sequence belongs to the bacterial ribosomal protein bL21 family. In terms of assembly, part of the 50S ribosomal subunit. Contacts protein L20.

This protein binds to 23S rRNA in the presence of protein L20. The polypeptide is Large ribosomal subunit protein bL21 (Synechococcus sp. (strain CC9902)).